Here is a 187-residue protein sequence, read N- to C-terminus: 3'-5' DNA exonuclease Cap18 (187 aa).

One can recognise an Exonuclease domain in the interval 9–173 (VSVDVETSGP…HDARYQAELF (165 aa)). Aspartate 12, methionine 25, histidine 160, and aspartate 165 together coordinate Mg(2+). Histidine 160 functions as the Proton donor/acceptor in the catalytic mechanism.

This sequence belongs to the Cap18 exonuclease family. In terms of assembly, homodimer.

Functionally, effector component of a CBASS antivirus system. CBASS (cyclic oligonucleotide-based antiphage signaling system) provides immunity against bacteriophage. The CD-NTase protein synthesizes cyclic nucleotides in response to infection; these serve as specific second messenger signals. The signals activate a diverse range of effectors, leading to bacterial cell death and thus abortive phage infection. A type III CBASS system. A sequence non-specific 3'-5' DNA exonuclease that preferentially degrades ssDNA with 3' overhangs or a mismatch at the 3' end. Expression of this CBASS system (Cap17-CapW-CdnC-Cap7-Cap6-Cap18-Cap19) in a susceptible E.coli (strain JP313) confers resistance to bacteriophage lambda cI--. The chain is 3'-5' DNA exonuclease Cap18 from Escherichia coli.